The sequence spans 378 residues: Spermidine/putrescine import ATP-binding protein PotA (378 aa).

The ABC transporter domain occupies 18–248 (VLLSGISKSF…PKNLFVAGFI (231 aa)). Residue 50–57 (GPSGCGKT) participates in ATP binding.

This sequence belongs to the ABC transporter superfamily. Spermidine/putrescine importer (TC 3.A.1.11.1) family. The complex is composed of two ATP-binding proteins (PotA), two transmembrane proteins (PotB and PotC) and a solute-binding protein (PotD).

The protein resides in the cell inner membrane. The enzyme catalyses ATP + H2O + polyamine-[polyamine-binding protein]Side 1 = ADP + phosphate + polyamineSide 2 + [polyamine-binding protein]Side 1.. Part of the ABC transporter complex PotABCD involved in spermidine/putrescine import. Responsible for energy coupling to the transport system. The sequence is that of Spermidine/putrescine import ATP-binding protein PotA from Salmonella choleraesuis (strain SC-B67).